A 519-amino-acid chain; its full sequence is 3-octaprenyl-4-hydroxybenzoate carboxy-lyase (519 aa).

N177 lines the Mn(2+) pocket. Residues 180 to 182, 194 to 196, and 199 to 200 contribute to the prenylated FMN site; these read IYR, RWL, and RG. Residue E243 participates in Mn(2+) binding. The active-site Proton donor is the D318.

The protein belongs to the UbiD family. In terms of assembly, homohexamer. Requires prenylated FMN as cofactor. Mn(2+) serves as cofactor.

The protein resides in the cell membrane. It catalyses the reaction a 4-hydroxy-3-(all-trans-polyprenyl)benzoate + H(+) = a 2-(all-trans-polyprenyl)phenol + CO2. It participates in cofactor biosynthesis; ubiquinone biosynthesis. Its function is as follows. Catalyzes the decarboxylation of 3-octaprenyl-4-hydroxy benzoate to 2-octaprenylphenol, an intermediate step in ubiquinone biosynthesis. The sequence is that of 3-octaprenyl-4-hydroxybenzoate carboxy-lyase from Burkholderia thailandensis (strain ATCC 700388 / DSM 13276 / CCUG 48851 / CIP 106301 / E264).